The chain runs to 169 residues: Major fimbrial subunit SMF-1 (169 aa).

The first 11 residues, 1 to 11 (MLAAAPLAANA), serve as a signal peptide directing secretion.

This sequence belongs to the fimbrial protein family.

The protein resides in the fimbrium. In terms of biological role, involved in adherence to eukaryotic epithelial cells and abiotic surfaces. Mediates agglutination of animal red blood cells. The protein is Major fimbrial subunit SMF-1 of Stenotrophomonas maltophilia (strain K279a).